A 123-amino-acid polypeptide reads, in one-letter code: Small ribosomal subunit protein uS12 (123 aa).

Residues M1–A26 are disordered. D89 carries the 3-methylthioaspartic acid modification. A disordered region spans residues T104–K123. Residues K108–K123 are compositionally biased toward basic residues.

This sequence belongs to the universal ribosomal protein uS12 family. As to quaternary structure, part of the 30S ribosomal subunit. Contacts proteins S8 and S17. May interact with IF1 in the 30S initiation complex.

Functionally, with S4 and S5 plays an important role in translational accuracy. Interacts with and stabilizes bases of the 16S rRNA that are involved in tRNA selection in the A site and with the mRNA backbone. Located at the interface of the 30S and 50S subunits, it traverses the body of the 30S subunit contacting proteins on the other side and probably holding the rRNA structure together. The combined cluster of proteins S8, S12 and S17 appears to hold together the shoulder and platform of the 30S subunit. The protein is Small ribosomal subunit protein uS12 of Acidithiobacillus ferrooxidans (strain ATCC 23270 / DSM 14882 / CIP 104768 / NCIMB 8455) (Ferrobacillus ferrooxidans (strain ATCC 23270)).